A 476-amino-acid chain; its full sequence is Bifunctional protein HldE (476 aa).

The interval 1–319 (MKPTLPNYDQ…EAIHGSQDSG (319 aa)) is ribokinase. Position 195 to 198 (195 to 198 (NMLE)) interacts with ATP. Asp264 is a catalytic residue. Positions 344 to 476 (MTNGCFDILH…IIEAIKGGRG (133 aa)) are cytidylyltransferase.

The protein in the N-terminal section; belongs to the carbohydrate kinase PfkB family. This sequence in the C-terminal section; belongs to the cytidylyltransferase family. Homodimer.

It catalyses the reaction D-glycero-beta-D-manno-heptose 7-phosphate + ATP = D-glycero-beta-D-manno-heptose 1,7-bisphosphate + ADP + H(+). It carries out the reaction D-glycero-beta-D-manno-heptose 1-phosphate + ATP + H(+) = ADP-D-glycero-beta-D-manno-heptose + diphosphate. Its pathway is nucleotide-sugar biosynthesis; ADP-L-glycero-beta-D-manno-heptose biosynthesis; ADP-L-glycero-beta-D-manno-heptose from D-glycero-beta-D-manno-heptose 7-phosphate: step 1/4. The protein operates within nucleotide-sugar biosynthesis; ADP-L-glycero-beta-D-manno-heptose biosynthesis; ADP-L-glycero-beta-D-manno-heptose from D-glycero-beta-D-manno-heptose 7-phosphate: step 3/4. Catalyzes the phosphorylation of D-glycero-D-manno-heptose 7-phosphate at the C-1 position to selectively form D-glycero-beta-D-manno-heptose-1,7-bisphosphate. Its function is as follows. Catalyzes the ADP transfer from ATP to D-glycero-beta-D-manno-heptose 1-phosphate, yielding ADP-D-glycero-beta-D-manno-heptose. The protein is Bifunctional protein HldE of Aliivibrio fischeri (strain ATCC 700601 / ES114) (Vibrio fischeri).